The sequence spans 314 residues: Homoserine O-succinyltransferase (314 aa).

C142 (acyl-thioester intermediate) is an active-site residue. Residues K163 and S192 each contribute to the substrate site. H235 (proton acceptor) is an active-site residue. The active site involves E237. R249 is a substrate binding site.

The protein belongs to the MetA family.

Its subcellular location is the cytoplasm. The catalysed reaction is L-homoserine + succinyl-CoA = O-succinyl-L-homoserine + CoA. It functions in the pathway amino-acid biosynthesis; L-methionine biosynthesis via de novo pathway; O-succinyl-L-homoserine from L-homoserine: step 1/1. Transfers a succinyl group from succinyl-CoA to L-homoserine, forming succinyl-L-homoserine. In Shewanella woodyi (strain ATCC 51908 / MS32), this protein is Homoserine O-succinyltransferase.